Here is a 95-residue protein sequence, read N- to C-terminus: Small ribosomal subunit protein bS6 (95 aa).

It belongs to the bacterial ribosomal protein bS6 family.

In terms of biological role, binds together with bS18 to 16S ribosomal RNA. This Exiguobacterium sibiricum (strain DSM 17290 / CCUG 55495 / CIP 109462 / JCM 13490 / 255-15) protein is Small ribosomal subunit protein bS6.